Consider the following 986-residue polypeptide: Resact receptor (986 aa).

An N-terminal signal peptide occupies residues 1-21 (MATTRLLFLLVVAVMITMVRS). At 22-507 (ATLHYNPTVI…GELCTNWGLY (486 aa)) the chain is on the extracellular side. Asn185, Asn361, and Asn410 each carry an N-linked (GlcNAc...) asparagine glycan. The helical transmembrane segment at 508 to 528 (LGTLIPAFIIIFGGGLGYYIY) threads the bilayer. Over 529 to 986 (RKRAYEAALD…SHSCSALHSS (458 aa)) the chain is Cytoplasmic. Residues 568 to 836 (LSAISVISNA…PNIIEVRTML (269 aa)) form the Protein kinase domain.

The protein localises to the membrane. It carries out the reaction GTP = 3',5'-cyclic GMP + diphosphate. Its function is as follows. Implicated as a cell-surface receptor on spermatozoa for 'resact' a chemotactic peptide, and on various other cells as a receptor for atrial natriuretic peptide. This chain is Resact receptor, found in Arbacia punctulata (Punctuate sea urchin).